The sequence spans 184 residues: Large ribosomal subunit protein uL6 (184 aa).

Belongs to the universal ribosomal protein uL6 family. As to quaternary structure, part of the 50S ribosomal subunit.

Its function is as follows. This protein binds to the 23S rRNA, and is important in its secondary structure. It is located near the subunit interface in the base of the L7/L12 stalk, and near the tRNA binding site of the peptidyltransferase center. In Amoebophilus asiaticus (strain 5a2), this protein is Large ribosomal subunit protein uL6.